We begin with the raw amino-acid sequence, 289 residues long: Nucleotide-binding protein FRAAL4592 (289 aa).

An ATP-binding site is contributed by 13–20 (GLSGAGRS). Residue 64 to 67 (DVRG) participates in GTP binding.

Belongs to the RapZ-like family.

Its function is as follows. Displays ATPase and GTPase activities. The chain is Nucleotide-binding protein FRAAL4592 from Frankia alni (strain DSM 45986 / CECT 9034 / ACN14a).